The sequence spans 401 residues: Argininosuccinate synthase (401 aa).

ATP contacts are provided by residues 9 to 17 and alanine 35; that span reads AYSGGLDTS. Tyrosine 86 contacts L-citrulline. Residue glycine 116 participates in ATP binding. L-aspartate contacts are provided by threonine 118, asparagine 122, and aspartate 123. Residue asparagine 122 participates in L-citrulline binding. Residues arginine 126, serine 175, serine 184, glutamate 261, and tyrosine 273 each coordinate L-citrulline.

This sequence belongs to the argininosuccinate synthase family. Type 1 subfamily. Homotetramer.

It is found in the cytoplasm. The catalysed reaction is L-citrulline + L-aspartate + ATP = 2-(N(omega)-L-arginino)succinate + AMP + diphosphate + H(+). It functions in the pathway amino-acid biosynthesis; L-arginine biosynthesis; L-arginine from L-ornithine and carbamoyl phosphate: step 2/3. In Aquifex aeolicus (strain VF5), this protein is Argininosuccinate synthase.